A 112-amino-acid polypeptide reads, in one-letter code: Transcriptional regulator WhiD (112 aa).

Residues 22–86 form the 4Fe-4S Wbl-type domain; sequence ACRGVDSSLF…GGLTEDEREE (65 aa). Residues C23, C53, C56, and C62 each coordinate [4Fe-4S] cluster.

The protein belongs to the WhiB family. As to quaternary structure, the 4Fe-4S form is a monomer; upon oxidation forms a disulfide-bonded homodimer. The cofactor is [4Fe-4S] cluster. Can be nitrosylated by NO, 8 NO react per cluster. These complexes are quite stable under anaerobic conditions, but degrade slowly aerobically. In terms of processing, upon Fe-S cluster removal intramolecular disulfide bonds are formed.

Its subcellular location is the cytoplasm. In terms of biological role, acts as a transcriptional regulator. Probably redox-responsive. The apo- but not holo-form probably binds DNA. Plays a positive role in prespore maturation and the initiation of sporulation septation. This Streptomyces coelicolor (strain ATCC BAA-471 / A3(2) / M145) protein is Transcriptional regulator WhiD (whiD).